Reading from the N-terminus, the 431-residue chain is uncharacterized protein (431 aa).

The next 4 helical transmembrane spans lie at 228-248 (GLLS…HYLS), 279-299 (IGLP…NFTF), 349-369 (ILWP…FLWI), and 388-408 (MIFN…LKLY).

The protein resides in the membrane. This is an uncharacterized protein from Saccharomyces cerevisiae (strain ATCC 204508 / S288c) (Baker's yeast).